We begin with the raw amino-acid sequence, 454 residues long: Protein odr-4 homolog (454 aa).

2 helical membrane-spanning segments follow: residues 82–102 and 432–452; these read MLPG…ELAN and IGVI…FHYF.

It belongs to the ODR-4 family. In terms of tissue distribution, ubiquitously expressed.

It localises to the membrane. Its function is as follows. May play a role in the trafficking of a subset of G-protein coupled receptors. The sequence is that of Protein odr-4 homolog from Homo sapiens (Human).